A 292-amino-acid polypeptide reads, in one-letter code: Golgi to ER traffic protein 2 (292 aa).

The segment covering 1–18 (MSELSAEEKRKLLRERRQ) has biased composition (basic and acidic residues). A disordered region spans residues 1-80 (MSELSAEEKR…TPLHDDPEVP (80 aa)). Over 1-158 (MSELSAEEKR…SQYHAYEQKQ (158 aa)) the chain is Cytoplasmic. Polar residues-rich tracts occupy residues 29 to 47 (RLNN…NVTS) and 55 to 71 (ATTT…QSPT). The helical transmembrane segment at 159-179 (WKARFLVVRWIIHTLNFVYHY) threads the bilayer. Topologically, residues 180 to 205 (IASGYKLSASPYAFVRAQAVDSHVRT) are lumenal. Residues 206 to 225 (FFTAFLTVEVAVISAYFLVM) traverse the membrane as a helical segment. Residues 226–268 (SQPKFKDFSRENLVSRILSMASAVVPAVGRYQPLVTRALVYWN) lie on the Cytoplasmic side of the membrane. A helical transmembrane segment spans residues 269 to 289 (GASIFVGDLMLMVFYFGITSV). The Lumenal portion of the chain corresponds to 290-292 (LGN).

The protein belongs to the GET2 family. As to quaternary structure, component of the Golgi to ER traffic (GET) complex, which is composed of GET1, GET2 and GET3. Within the complex, GET1 and GET2 form a heterotetramer which is stabilized by phosphatidylinositol binding and which binds to the GET3 homodimer.

Its subcellular location is the endoplasmic reticulum membrane. The protein localises to the golgi apparatus membrane. Required for the post-translational delivery of tail-anchored (TA) proteins to the endoplasmic reticulum. Together with GET1, acts as a membrane receptor for soluble GET3, which recognizes and selectively binds the transmembrane domain of TA proteins in the cytosol. The GET complex cooperates with the HDEL receptor ERD2 to mediate the ATP-dependent retrieval of resident ER proteins that contain a C-terminal H-D-E-L retention signal from the Golgi to the ER. The protein is Golgi to ER traffic protein 2 of Clavispora lusitaniae (strain ATCC 42720) (Yeast).